The sequence spans 416 residues: Adenylosuccinate synthetase (416 aa).

Residues 13 to 19 and 41 to 43 each bind GTP; these read GDEGKGK and GHT. Asp14 acts as the Proton acceptor in catalysis. Asp14 and Gly41 together coordinate Mg(2+). IMP contacts are provided by residues 14 to 17, 39 to 42, Thr126, Arg140, Gln220, Thr235, and Arg299; these read DEGK and NAGH. His42 functions as the Proton donor in the catalytic mechanism. 295-301 serves as a coordination point for substrate; the sequence is TTTGRRR. GTP is bound by residues Arg301, 327–329, and 405–407; these read KLD and STS.

The protein belongs to the adenylosuccinate synthetase family. Homodimer. Requires Mg(2+) as cofactor.

Its subcellular location is the cytoplasm. The enzyme catalyses IMP + L-aspartate + GTP = N(6)-(1,2-dicarboxyethyl)-AMP + GDP + phosphate + 2 H(+). The protein operates within purine metabolism; AMP biosynthesis via de novo pathway; AMP from IMP: step 1/2. Functionally, plays an important role in the de novo pathway of purine nucleotide biosynthesis. Catalyzes the first committed step in the biosynthesis of AMP from IMP. The sequence is that of Adenylosuccinate synthetase from Campylobacter curvus (strain 525.92).